A 112-amino-acid chain; its full sequence is Diuretic hormone class 2 (112 aa).

An N-terminal signal peptide occupies residues 1 to 24 (MVRATCLLASCVLFALLLIVPASA). Residues 25-71 (YPRYPSNYFREEGQYEPEEIMDMLNRLGNLIQMERKMENYKEDITSE) constitute a propeptide that is removed on maturation. The residue at position 104 (Pro104) is a Proline amide. Positions 108–112 (RRDAH) are excised as a propeptide.

Expressed in corpora cardiaca (CC), corpora allata (CA), antennal lobe (AL) and gnathal ganglion (GNG) (at protein level). Expression in CC, CA and AL detected in most animals, expression in GNG in few animals (at protein level).

It is found in the secreted. In terms of biological role, regulation of fluid secretion. Stimulates Malpighian tubule fluid secretion. The polypeptide is Diuretic hormone class 2 (Agrotis ipsilon (Black cutworm moth)).